Reading from the N-terminus, the 163-residue chain is Ureidoglycolate lyase (163 aa).

It belongs to the ureidoglycolate lyase family. Homodimer. Ni(2+) is required as a cofactor.

It carries out the reaction (S)-ureidoglycolate = urea + glyoxylate. It participates in nitrogen metabolism; (S)-allantoin degradation. Its function is as follows. Catalyzes the catabolism of the allantoin degradation intermediate (S)-ureidoglycolate, generating urea and glyoxylate. Involved in the utilization of allantoin as nitrogen source. This is Ureidoglycolate lyase from Mesorhizobium japonicum (strain LMG 29417 / CECT 9101 / MAFF 303099) (Mesorhizobium loti (strain MAFF 303099)).